The sequence spans 252 residues: uncharacterized protein (252 aa).

Positions 13–247 constitute an ABC transporter domain; it reads ITLENVNKWY…PKSERTRAFL (235 aa). 45–52 is an ATP binding site; it reads GPSGSGKS.

It belongs to the ABC transporter superfamily.

It localises to the cell inner membrane. In terms of biological role, probably part of a binding-protein-dependent transport system YdhWXYZ for an amino acid. Probably responsible for energy coupling to the transport system. This is an uncharacterized protein from Escherichia coli (strain K12).